A 464-amino-acid chain; its full sequence is Dolichyl-diphosphooligosaccharide--protein glycosyltransferase subunit 1B (464 aa).

A signal peptide spans 1–24 (MAARIGIFSVFVAVLLSISAFSSA). Over 25-436 (QDLQIVNAER…TFKPIYMLAE (412 aa)) the chain is Lumenal. Residues Asn-106 and Asn-298 are each glycosylated (N-linked (GlcNAc...) asparagine). Lys-310 participates in a covalent cross-link: Glycyl lysine isopeptide (Lys-Gly) (interchain with G-Cter in ubiquitin). The N-linked (GlcNAc...) asparagine glycan is linked to Asn-352. Residues 437 to 457 (PFMLVSAFFLVFVASLAYVHI) traverse the membrane as a helical segment. The Cytoplasmic segment spans residues 458–464 (DLNIVRK).

Belongs to the OST1 family. In terms of assembly, component of the oligosaccharyltransferase (OST) complex.

Its subcellular location is the endoplasmic reticulum membrane. Its pathway is protein modification; protein glycosylation. In terms of biological role, subunit of the oligosaccharyl transferase (OST) complex that catalyzes the initial transfer of a defined glycan (Glc(3)Man(9)GlcNAc(2) in eukaryotes) from the lipid carrier dolichol-pyrophosphate to an asparagine residue within an Asn-X-Ser/Thr consensus motif in nascent polypeptide chains, the first step in protein N-glycosylation. N-glycosylation occurs cotranslationally and the complex associates with the Sec61 complex at the channel-forming translocon complex that mediates protein translocation across the endoplasmic reticulum (ER). All subunits are required for a maximal enzyme activity. The sequence is that of Dolichyl-diphosphooligosaccharide--protein glycosyltransferase subunit 1B (OST1B) from Arabidopsis thaliana (Mouse-ear cress).